The primary structure comprises 202 residues: Recombination protein RecR (202 aa).

The C4-type zinc finger occupies 56–71 (CVVCGTVSDGELCRIC). Residues 79 to 179 (TMICVVEEPK…TVTRLASGLP (101 aa)) form the Toprim domain.

This sequence belongs to the RecR family.

Functionally, may play a role in DNA repair. It seems to be involved in an RecBC-independent recombinational process of DNA repair. It may act with RecF and RecO. The polypeptide is Recombination protein RecR (Nocardia farcinica (strain IFM 10152)).